We begin with the raw amino-acid sequence, 212 residues long: MTSAANKRSIMTLFSDKTDIYCHQVRIVLAEKGVAYETEVVDPQVVSEDLMELNPYGTLPTLVDRDLVLFNSRIIMEYLDERFPHPPLMPVYPVARGKSRLLMLRIEQDWYPVLAKAEKGTDAERAVALKQLREEILAIAPIFTQMPYFMSEEFSLVDCYIAPLLWRMQELGVDFSGAGSKAIKAYMARVFERDSFMQSLGVSAPKNLMDEK.

The 79-residue stretch at 9–87 folds into the GST N-terminal domain; the sequence is SIMTLFSDKT…YLDERFPHPP (79 aa). Residues 92-212 enclose the GST C-terminal domain; it reads YPVARGKSRL…SAPKNLMDEK (121 aa).

This sequence belongs to the GST superfamily. HSP26 family.

Its function is as follows. Forms an equimolar complex with the RNA polymerase holoenzyme (RNAP) but not with the core enzyme. This chain is Stringent starvation protein A homolog (sspA), found in Pasteurella multocida (strain Pm70).